The chain runs to 328 residues: D-cysteine desulfhydrase (328 aa).

An N6-(pyridoxal phosphate)lysine modification is found at lysine 51.

Belongs to the ACC deaminase/D-cysteine desulfhydrase family. As to quaternary structure, homodimer. Pyridoxal 5'-phosphate serves as cofactor.

The catalysed reaction is D-cysteine + H2O = hydrogen sulfide + pyruvate + NH4(+) + H(+). Catalyzes the alpha,beta-elimination reaction of D-cysteine and of several D-cysteine derivatives. It could be a defense mechanism against D-cysteine. This chain is D-cysteine desulfhydrase, found in Salmonella agona (strain SL483).